A 117-amino-acid polypeptide reads, in one-letter code: Ig heavy chain V region MOPC 173 (117 aa).

The Ig-like domain maps to 1 to 116; that stretch reads EVKLLESGGP…WGQGTSVTVS (116 aa). Cys22 and Cys96 are oxidised to a cystine.

The protein is Ig heavy chain V region MOPC 173 of Mus musculus (Mouse).